A 148-amino-acid chain; its full sequence is Early glycoprotein GP48 (148 aa).

Positions 1-21 (MMLRAWRLMVLLAAYCYYVFA) are cleaved as a signal peptide. 10 N-linked (GlcNAc...) asparagine; by host glycosylation sites follow: N22, N44, N49, N57, N65, N104, N108, N118, N135, and N144.

Belongs to the RL11 family. Post-translationally, N-glycosylated and possibly O-glycosylated.

Its subcellular location is the virion membrane. In Homo sapiens (Human), this protein is Early glycoprotein GP48 (UL4).